Here is a 170-residue protein sequence, read N- to C-terminus: Opacity-related protein POPM3 (170 aa).

The protein belongs to the opacity porin family.

Its subcellular location is the cell outer membrane. In Neisseria meningitidis serogroup C, this protein is Opacity-related protein POPM3 (opr).